A 470-amino-acid polypeptide reads, in one-letter code: Leucine-rich repeat extensin-like protein 6 (470 aa).

Positions methionine 1 to threonine 28 are cleaved as a signal peptide. A glycan (N-linked (GlcNAc...) asparagine) is linked at asparagine 83. LRR repeat units lie at residues valine 98–leucine 122, threonine 123–leucine 146, histidine 147–leucine 170, proline 171–leucine 194, leucine 196–serine 217, valine 219–methionine 241, lysine 243–leucine 265, leucine 266–methionine 290, lysine 291–leucine 314, and arginine 316–leucine 337. The N-linked (GlcNAc...) asparagine glycan is linked to asparagine 319. The disordered stretch occupies residues serine 378–proline 411. Positions serine 378–tyrosine 470 are contains the Ser-Pro(4) repeats.

In terms of processing, hydroxylated on proline residues in the S-P-P-P-P repeat. O-glycosylated on hydroxyprolines. Expressed in roots.

The protein resides in the secreted. The protein localises to the cell wall. Functionally, modulates cell morphogenesis by regulating cell wall formation and assembly, and/or growth polarization. The polypeptide is Leucine-rich repeat extensin-like protein 6 (LRX6) (Arabidopsis thaliana (Mouse-ear cress)).